We begin with the raw amino-acid sequence, 310 residues long: Ribosomal protein uL3 glutamine methyltransferase (310 aa).

This sequence belongs to the protein N5-glutamine methyltransferase family. PrmB subfamily.

The enzyme catalyses L-glutaminyl-[ribosomal protein uL3] + S-adenosyl-L-methionine = N(5)-methyl-L-glutaminyl-[ribosomal protein uL3] + S-adenosyl-L-homocysteine + H(+). Its function is as follows. Specifically methylates large ribosomal subunit protein uL3 on 'Gln-150'. This chain is Ribosomal protein uL3 glutamine methyltransferase, found in Salmonella typhi.